The chain runs to 59 residues: ATP synthase subunit J, mitochondrial (59 aa).

A helical membrane pass occupies residues 9–25; the sequence is ILKVYWPFFVAGAAVYY.

This sequence belongs to the ATPase j subunit family. In terms of assembly, F-type ATPases have 2 components, CF(1) - the catalytic core - and CF(0) - the membrane proton channel. In yeast, the dimeric form of ATP synthase consists of 17 polypeptides: alpha, beta, gamma, delta, epsilon, 4 (B), 5 (OSCP), 6 (A), 8, 9 (C), d, E (Tim11), f, g, h, i/j and k.

The protein resides in the mitochondrion membrane. In terms of biological role, mitochondrial membrane ATP synthase (F(1)F(0) ATP synthase or Complex V) produces ATP from ADP in the presence of a proton gradient across the membrane which is generated by electron transport complexes of the respiratory chain. F-type ATPases consist of two structural domains, F(1) - containing the extramembraneous catalytic core and F(0) - containing the membrane proton channel, linked together by a central stalk and a peripheral stalk. During catalysis, ATP synthesis in the catalytic domain of F(1) is coupled via a rotary mechanism of the central stalk subunits to proton translocation. Part of the complex F(0) domain. Minor subunit located with subunit a in the membrane. This Saccharomyces cerevisiae (strain ATCC 204508 / S288c) (Baker's yeast) protein is ATP synthase subunit J, mitochondrial (ATP18).